The chain runs to 40 residues: Mu-thomitoxin-Hme1b (40 aa).

3 disulfides stabilise this stretch: C2/C18, C9/C22, and C17/C33.

This sequence belongs to the neurotoxin 19 (CSTX) family. Post-translationally, contains 3 disulfide bonds. In terms of tissue distribution, expressed by the venom gland.

Its subcellular location is the secreted. Blocks the Nav1.2/SCN2A, Nav1.4/SCN4A, Nav1.5/SCN5A and Nav1.6/SCN8A sodium channels. Shows a slight preference for the Nav1.2 and Nav1.4 channels. Reduces the peak amplitude of the sodium current and negatively shifts the steady-state inactivation process. Does not shift the threshold potential of activation or the voltage corresponding to maximal current. Does not change the reversal potential of the sodium current. May act on site 1 of the receptor. This Heriaeus mellotteei (Crab spider) protein is Mu-thomitoxin-Hme1b.